The sequence spans 666 residues: tRNA 5-methylaminomethyl-2-thiouridine biosynthesis bifunctional protein MnmC (666 aa).

The tract at residues 1–245 is tRNA (mnm(5)s(2)U34)-methyltransferase; that stretch reads MKQYAIQPAT…KREMLCGVME (245 aa). The interval 270–666 is FAD-dependent cmnm(5)s(2)U34 oxidoreductase; it reads IGGGIASALL…RKLLKGKAVK (397 aa).

The protein in the N-terminal section; belongs to the methyltransferase superfamily. tRNA (mnm(5)s(2)U34)-methyltransferase family. It in the C-terminal section; belongs to the DAO family. It depends on FAD as a cofactor.

Its subcellular location is the cytoplasm. The catalysed reaction is 5-aminomethyl-2-thiouridine(34) in tRNA + S-adenosyl-L-methionine = 5-methylaminomethyl-2-thiouridine(34) in tRNA + S-adenosyl-L-homocysteine + H(+). Catalyzes the last two steps in the biosynthesis of 5-methylaminomethyl-2-thiouridine (mnm(5)s(2)U) at the wobble position (U34) in tRNA. Catalyzes the FAD-dependent demodification of cmnm(5)s(2)U34 to nm(5)s(2)U34, followed by the transfer of a methyl group from S-adenosyl-L-methionine to nm(5)s(2)U34, to form mnm(5)s(2)U34. The protein is tRNA 5-methylaminomethyl-2-thiouridine biosynthesis bifunctional protein MnmC of Salmonella paratyphi B (strain ATCC BAA-1250 / SPB7).